A 494-amino-acid chain; its full sequence is Calmodulin-binding protein 60 A (494 aa).

The tract at residues 1–62 (MRIPTYDFGS…AGIKWICEKE (62 aa)) is calmodulin-binding. Residues 132-252 (VSDWTDEDIR…AFHRRLNLSN (121 aa)) form a DNA-binding region.

Belongs to the plant ACBP60 protein family. Interacts with calmodulin (CaM). In terms of tissue distribution, expressed in stems, flowers and root.

Its subcellular location is the nucleus. Transcription activator that binds DNA in a sequence-specific manner, likely 5'-GAAATTTTGG-3', to promote the expression of target genes. This is Calmodulin-binding protein 60 A from Arabidopsis thaliana (Mouse-ear cress).